The chain runs to 366 residues: Quinolinate synthase (366 aa).

2 residues coordinate iminosuccinate: His44 and Ser61. Cys108 is a binding site for [4Fe-4S] cluster. Iminosuccinate-binding positions include 139–141 (YIN) and Ser160. Cys228 contributes to the [4Fe-4S] cluster binding site. Iminosuccinate is bound by residues 254–256 (HPE) and Thr271. Cys318 is a binding site for [4Fe-4S] cluster.

Belongs to the quinolinate synthase family. Type 3 subfamily. It depends on [4Fe-4S] cluster as a cofactor.

Its subcellular location is the cytoplasm. It carries out the reaction iminosuccinate + dihydroxyacetone phosphate = quinolinate + phosphate + 2 H2O + H(+). It functions in the pathway cofactor biosynthesis; NAD(+) biosynthesis; quinolinate from iminoaspartate: step 1/1. Functionally, catalyzes the condensation of iminoaspartate with dihydroxyacetone phosphate to form quinolinate. This chain is Quinolinate synthase, found in Listeria innocua serovar 6a (strain ATCC BAA-680 / CLIP 11262).